A 1057-amino-acid chain; its full sequence is Carbamoyl phosphate synthase large chain (1057 aa).

The carboxyphosphate synthetic domain stretch occupies residues 1–401 (MPKRNDIKTI…SLLKAIRSLE (401 aa)). Residues R129, R169, G175, G176, K208, I210, E215, G241, I242, H243, Q284, and E298 each contribute to the ATP site. One can recognise an ATP-grasp 1 domain in the interval 133–327 (RTLMNDLNVP…IAKLAAKIAV (195 aa)). Mg(2+)-binding residues include Q284, E298, and N300. Mn(2+) is bound by residues Q284, E298, and N300. Residues 402–546 (YGVHHLGLPN…YGTYETENES (145 aa)) form an oligomerization domain region. Residues 547 to 929 (IVTDKEKILV…ALFKGLTGSG (383 aa)) are carbamoyl phosphate synthetic domain. Residues 671–861 (EALLRKINVP…MAQLAMRAII (191 aa)) enclose the ATP-grasp 2 domain. ATP contacts are provided by R707, R746, L748, E752, G777, V778, H779, S780, Q820, and E832. Residues Q820, E832, and N834 each contribute to the Mg(2+) site. 3 residues coordinate Mn(2+): Q820, E832, and N834. The MGS-like domain maps to 930-1057 (VEVKDHGTVL…ESMTFTMRQM (128 aa)). Residues 930-1057 (VEVKDHGTVL…ESMTFTMRQM (128 aa)) form an allosteric domain region.

This sequence belongs to the CarB family. Composed of two chains; the small (or glutamine) chain promotes the hydrolysis of glutamine to ammonia, which is used by the large (or ammonia) chain to synthesize carbamoyl phosphate. Tetramer of heterodimers (alpha,beta)4. The cofactor is Mg(2+). Mn(2+) is required as a cofactor.

The enzyme catalyses hydrogencarbonate + L-glutamine + 2 ATP + H2O = carbamoyl phosphate + L-glutamate + 2 ADP + phosphate + 2 H(+). It carries out the reaction hydrogencarbonate + NH4(+) + 2 ATP = carbamoyl phosphate + 2 ADP + phosphate + 2 H(+). Its pathway is amino-acid biosynthesis; L-arginine biosynthesis; carbamoyl phosphate from bicarbonate: step 1/1. The protein operates within pyrimidine metabolism; UMP biosynthesis via de novo pathway; (S)-dihydroorotate from bicarbonate: step 1/3. Its function is as follows. Large subunit of the glutamine-dependent carbamoyl phosphate synthetase (CPSase). CPSase catalyzes the formation of carbamoyl phosphate from the ammonia moiety of glutamine, carbonate, and phosphate donated by ATP, constituting the first step of 2 biosynthetic pathways, one leading to arginine and/or urea and the other to pyrimidine nucleotides. The large subunit (synthetase) binds the substrates ammonia (free or transferred from glutamine from the small subunit), hydrogencarbonate and ATP and carries out an ATP-coupled ligase reaction, activating hydrogencarbonate by forming carboxy phosphate which reacts with ammonia to form carbamoyl phosphate. This is Carbamoyl phosphate synthase large chain from Staphylococcus aureus (strain Mu3 / ATCC 700698).